A 444-amino-acid polypeptide reads, in one-letter code: P2X purinoceptor 5 (444 aa).

The Cytoplasmic portion of the chain corresponds to 1 to 30 (MGQAGCKGLCLSLFDYKTEKYVIAKNKKVG). Residues 31–51 (LLYRLLQASILAYLVVWVFLI) traverse the membrane as a helical segment. Residues 52 to 319 (KKGYQDVDTS…RTLMKAYGIR (268 aa)) are Extracellular-facing. An N-linked (GlcNAc...) asparagine glycan is attached at Asn-77. Disulfide bonds link Cys-118-Cys-169, Cys-129-Cys-152, and Cys-135-Cys-163. The N-linked (GlcNAc...) asparagine glycan is linked to Asn-202. Intrachain disulfides connect Cys-220–Cys-229 and Cys-263–Cys-272. A helical transmembrane segment spans residues 320–362 (FDVMVNGKAGKFSIIPTIINVGSGVALMGAGAFFCDLVLIYLI). Topologically, residues 363–444 (KKREFYRDKK…PQLLEPHRST (82 aa)) are cytoplasmic. The tract at residues 378–444 (GLEDSSQEAE…PQLLEPHRST (67 aa)) is disordered.

The protein belongs to the P2X receptor family. Functional P2XRs are organized as homomeric and heteromeric trimers. Homotrimer. Forms heterotrimer with P2RX1. Expressed at high levels in brain and immune system.

The protein localises to the cell membrane. It carries out the reaction Na(+)(in) = Na(+)(out). The catalysed reaction is Ca(2+)(in) = Ca(2+)(out). It catalyses the reaction chloride(in) = chloride(out). Its activity is regulated as follows. Activated by ATP. Slowly desensitizing. Sensitive to the ATP agonist alpha/beta-methylene-ATP. Its function is as follows. ATP-gated nonselective transmembrane cation channel permeable to potassium, sodium and calcium. Unlike other P2RX receptors, the P2X5 receptor is also permeable to chloride. May play a supporting role in the inflammatory response. Functionally, non-functional. This chain is P2X purinoceptor 5, found in Homo sapiens (Human).